Here is a 151-residue protein sequence, read N- to C-terminus: MPKIQIRILDSRLGNEIPLPHYATPGAAGLDLRACLDASLVLQPGETRLIPTGFAIHIGDPDLAAVLLPRSGLGHKHGIVLGNLVGLIDSDYQGQVLVSCWNRGPEPFEIAVGERIAQMVFVPVVQVSFEQVEAFAESRRAEGGFGHTGRH.

Residues 70 to 72 (RSG), Asn-83, and 87 to 89 (LID) contribute to the substrate site.

The protein belongs to the dUTPase family. Mg(2+) serves as cofactor.

It catalyses the reaction dUTP + H2O = dUMP + diphosphate + H(+). It functions in the pathway pyrimidine metabolism; dUMP biosynthesis; dUMP from dCTP (dUTP route): step 2/2. Functionally, this enzyme is involved in nucleotide metabolism: it produces dUMP, the immediate precursor of thymidine nucleotides and it decreases the intracellular concentration of dUTP so that uracil cannot be incorporated into DNA. This chain is Deoxyuridine 5'-triphosphate nucleotidohydrolase, found in Methylococcus capsulatus (strain ATCC 33009 / NCIMB 11132 / Bath).